The chain runs to 277 residues: Isoprenyl transferase 1 (277 aa).

The segment at 1–30 (MAVRGILGRQRREYRTPEPHPSGARPPKLG) is disordered. Asp-42 is a catalytic residue. Asp-42 is a binding site for Mg(2+). Residues 43–46 (GNGR), Trp-47, Arg-55, His-59, and 87–89 (STE) contribute to the substrate site. Catalysis depends on Asn-90, which acts as the Proton acceptor. Substrate contacts are provided by residues Trp-91, Arg-93, Arg-210, and 216-218 (RTS). Glu-229 is a binding site for Mg(2+).

It belongs to the UPP synthase family. As to quaternary structure, homodimer. The cofactor is Mg(2+).

Catalyzes the condensation of isopentenyl diphosphate (IPP) with allylic pyrophosphates generating different type of terpenoids. The polypeptide is Isoprenyl transferase 1 (Streptomyces coelicolor (strain ATCC BAA-471 / A3(2) / M145)).